The primary structure comprises 414 residues: ATP-dependent Clp protease ATP-binding subunit ClpX (414 aa).

Residues 1–51 (MADSKTKKKCSFCGRSENEVGFLITGMNGYICDSCATQAYEITQEALGEGR) enclose the ClpX-type ZB domain. Zn(2+)-binding residues include C10, C13, C32, and C35. 120-127 (STGTGKTL) contributes to the ATP binding site.

Belongs to the ClpX chaperone family. As to quaternary structure, component of the ClpX-ClpP complex. Forms a hexameric ring that, in the presence of ATP, binds to fourteen ClpP subunits assembled into a disk-like structure with a central cavity, resembling the structure of eukaryotic proteasomes.

In terms of biological role, ATP-dependent specificity component of the Clp protease. It directs the protease to specific substrates. Can perform chaperone functions in the absence of ClpP. In Bacteroides thetaiotaomicron (strain ATCC 29148 / DSM 2079 / JCM 5827 / CCUG 10774 / NCTC 10582 / VPI-5482 / E50), this protein is ATP-dependent Clp protease ATP-binding subunit ClpX.